Reading from the N-terminus, the 504-residue chain is Arabinose import ATP-binding protein AraG (504 aa).

ABC transporter domains lie at 8–243 (LSFR…MVGR) and 256–499 (YGEE…MPKV). 40–47 (GENGAGKS) contacts ATP.

It belongs to the ABC transporter superfamily. Arabinose importer (TC 3.A.1.2.2) family. The complex is composed of two ATP-binding proteins (AraG), two transmembrane proteins (AraH) and a solute-binding protein (AraF).

It localises to the cell inner membrane. The enzyme catalyses L-arabinose(out) + ATP + H2O = L-arabinose(in) + ADP + phosphate + H(+). In terms of biological role, part of the ABC transporter complex AraFGH involved in arabinose import. Responsible for energy coupling to the transport system. This is Arabinose import ATP-binding protein AraG from Shigella sonnei (strain Ss046).